The chain runs to 218 residues: Phosphatidylserine decarboxylase proenzyme (218 aa).

Catalysis depends on serine 187, which acts as the Schiff-base intermediate with substrate; via pyruvic acid. Position 187 is a pyruvic acid (Ser); by autocatalysis (serine 187).

The protein belongs to the phosphatidylserine decarboxylase family. PSD-A subfamily. In terms of assembly, heterodimer of a large membrane-associated beta subunit and a small pyruvoyl-containing alpha subunit. The cofactor is pyruvate. Is synthesized initially as an inactive proenzyme. Formation of the active enzyme involves a self-maturation process in which the active site pyruvoyl group is generated from an internal serine residue via an autocatalytic post-translational modification. Two non-identical subunits are generated from the proenzyme in this reaction, and the pyruvate is formed at the N-terminus of the alpha chain, which is derived from the carboxyl end of the proenzyme. The post-translation cleavage follows an unusual pathway, termed non-hydrolytic serinolysis, in which the side chain hydroxyl group of the serine supplies its oxygen atom to form the C-terminus of the beta chain, while the remainder of the serine residue undergoes an oxidative deamination to produce ammonia and the pyruvoyl prosthetic group on the alpha chain.

It localises to the cell membrane. It catalyses the reaction a 1,2-diacyl-sn-glycero-3-phospho-L-serine + H(+) = a 1,2-diacyl-sn-glycero-3-phosphoethanolamine + CO2. It participates in phospholipid metabolism; phosphatidylethanolamine biosynthesis; phosphatidylethanolamine from CDP-diacylglycerol: step 2/2. Catalyzes the formation of phosphatidylethanolamine (PtdEtn) from phosphatidylserine (PtdSer). The chain is Phosphatidylserine decarboxylase proenzyme from Geobacter sulfurreducens (strain ATCC 51573 / DSM 12127 / PCA).